A 396-amino-acid chain; its full sequence is Arginine biosynthesis bifunctional protein ArgJ (396 aa).

Substrate contacts are provided by T150, K177, T188, E267, N391, and T396. The Nucleophile role is filled by T188.

Belongs to the ArgJ family. In terms of assembly, heterotetramer of two alpha and two beta chains.

It localises to the cytoplasm. It carries out the reaction N(2)-acetyl-L-ornithine + L-glutamate = N-acetyl-L-glutamate + L-ornithine. The enzyme catalyses L-glutamate + acetyl-CoA = N-acetyl-L-glutamate + CoA + H(+). Its pathway is amino-acid biosynthesis; L-arginine biosynthesis; L-ornithine and N-acetyl-L-glutamate from L-glutamate and N(2)-acetyl-L-ornithine (cyclic): step 1/1. The protein operates within amino-acid biosynthesis; L-arginine biosynthesis; N(2)-acetyl-L-ornithine from L-glutamate: step 1/4. In terms of biological role, catalyzes two activities which are involved in the cyclic version of arginine biosynthesis: the synthesis of N-acetylglutamate from glutamate and acetyl-CoA as the acetyl donor, and of ornithine by transacetylation between N(2)-acetylornithine and glutamate. This Wolinella succinogenes (strain ATCC 29543 / DSM 1740 / CCUG 13145 / JCM 31913 / LMG 7466 / NCTC 11488 / FDC 602W) (Vibrio succinogenes) protein is Arginine biosynthesis bifunctional protein ArgJ.